We begin with the raw amino-acid sequence, 113 residues long: Putative pterin-4-alpha-carbinolamine dehydratase (113 aa).

It belongs to the pterin-4-alpha-carbinolamine dehydratase family.

The enzyme catalyses (4aS,6R)-4a-hydroxy-L-erythro-5,6,7,8-tetrahydrobiopterin = (6R)-L-erythro-6,7-dihydrobiopterin + H2O. This chain is Putative pterin-4-alpha-carbinolamine dehydratase, found in Idiomarina loihiensis (strain ATCC BAA-735 / DSM 15497 / L2-TR).